A 68-amino-acid polypeptide reads, in one-letter code: Small ribosomal subunit protein bS21 (68 aa).

This sequence belongs to the bacterial ribosomal protein bS21 family.

This Jannaschia sp. (strain CCS1) protein is Small ribosomal subunit protein bS21.